A 135-amino-acid chain; its full sequence is Retinol-binding protein 5 (135 aa).

This sequence belongs to the calycin superfamily. Fatty-acid binding protein (FABP) family. Kidney.

It is found in the cytoplasm. Intracellular transport of retinol. The sequence is that of Retinol-binding protein 5 (RBP5) from Bos taurus (Bovine).